Consider the following 178-residue polypeptide: Large ribosomal subunit protein uL13m (178 aa).

Position 2 is an N-acetylserine (Ser2).

It belongs to the universal ribosomal protein uL13 family. In terms of assembly, component of the mitochondrial large ribosomal subunit (mt-LSU). Mature mammalian 55S mitochondrial ribosomes consist of a small (28S) and a large (39S) subunit. The 28S small subunit contains a 12S ribosomal RNA (12S mt-rRNA) and 30 different proteins. The 39S large subunit contains a 16S rRNA (16S mt-rRNA), a copy of mitochondrial valine transfer RNA (mt-tRNA(Val)), which plays an integral structural role, and 52 different proteins. Interacts with OXA1L.

The protein resides in the mitochondrion. This Homo sapiens (Human) protein is Large ribosomal subunit protein uL13m (MRPL13).